The chain runs to 269 residues: Formamidopyrimidine-DNA glycosylase (269 aa).

Residue Pro2 is the Schiff-base intermediate with DNA of the active site. Glu3 functions as the Proton donor in the catalytic mechanism. Catalysis depends on Lys57, which acts as the Proton donor; for beta-elimination activity. Residues His90, Arg109, and Lys150 each coordinate DNA. Residues 235 to 269 (QVYGRKGEPCRVCGTPIVATKHAQRATFYCRHCQK) form an FPG-type zinc finger. The active-site Proton donor; for delta-elimination activity is the Arg259.

The protein belongs to the FPG family. Monomer. Zn(2+) serves as cofactor.

The enzyme catalyses Hydrolysis of DNA containing ring-opened 7-methylguanine residues, releasing 2,6-diamino-4-hydroxy-5-(N-methyl)formamidopyrimidine.. It carries out the reaction 2'-deoxyribonucleotide-(2'-deoxyribose 5'-phosphate)-2'-deoxyribonucleotide-DNA = a 3'-end 2'-deoxyribonucleotide-(2,3-dehydro-2,3-deoxyribose 5'-phosphate)-DNA + a 5'-end 5'-phospho-2'-deoxyribonucleoside-DNA + H(+). Its function is as follows. Involved in base excision repair of DNA damaged by oxidation or by mutagenic agents. Acts as a DNA glycosylase that recognizes and removes damaged bases. Has a preference for oxidized purines, such as 7,8-dihydro-8-oxoguanine (8-oxoG). Has AP (apurinic/apyrimidinic) lyase activity and introduces nicks in the DNA strand. Cleaves the DNA backbone by beta-delta elimination to generate a single-strand break at the site of the removed base with both 3'- and 5'-phosphates. The sequence is that of Formamidopyrimidine-DNA glycosylase from Salmonella heidelberg (strain SL476).